The following is a 243-amino-acid chain: Small ribosomal subunit protein uS3 (243 aa).

The 72-residue stretch at 39–110 (IRVFIQKKYG…QVRINVVEIE (72 aa)) folds into the KH type-2 domain. The interval 216 to 243 (QPLPVGASPRRKGNRRPQQFEDRSNDGK) is disordered. The span at 233–243 (QQFEDRSNDGK) shows a compositional bias: basic and acidic residues.

This sequence belongs to the universal ribosomal protein uS3 family. In terms of assembly, part of the 30S ribosomal subunit. Forms a tight complex with proteins S10 and S14.

In terms of biological role, binds the lower part of the 30S subunit head. Binds mRNA in the 70S ribosome, positioning it for translation. The polypeptide is Small ribosomal subunit protein uS3 (Prochlorococcus marinus (strain SARG / CCMP1375 / SS120)).